The sequence spans 409 residues: Probable tRNA N6-adenosine threonylcarbamoyltransferase, mitochondrial (409 aa).

A mitochondrion-targeting transit peptide spans 1–31 (MHALRNFAGNGIANVFGCGIRRRLSYVLGIE). Positions 135 and 139 each coordinate a divalent metal cation. Substrate-binding positions include 159–163 (LASGG), D192, G212, E216, 322–323 (NN), and S350. D351 contributes to the a divalent metal cation binding site.

This sequence belongs to the KAE1 / TsaD family. Homodimer. It depends on a divalent metal cation as a cofactor.

The protein resides in the mitochondrion. The catalysed reaction is L-threonylcarbamoyladenylate + adenosine(37) in tRNA = N(6)-L-threonylcarbamoyladenosine(37) in tRNA + AMP + H(+). Its function is as follows. Required for the formation of a threonylcarbamoyl group on adenosine at position 37 (t(6)A37) in mitochondrial tRNAs that read codons beginning with adenine. Probably involved in the transfer of the threonylcarbamoyl moiety of threonylcarbamoyl-AMP (TC-AMP) to the N6 group of A37. Involved in mitochondrial genome maintenance. This chain is Probable tRNA N6-adenosine threonylcarbamoyltransferase, mitochondrial, found in Drosophila melanogaster (Fruit fly).